We begin with the raw amino-acid sequence, 315 residues long: Putative peptide transport system permease protein BMEII0209 (315 aa).

6 helical membrane-spanning segments follow: residues 13–33 (AIPVMLIVAILTFLLMKLLPG), 102–122 (LALLAFAITIPVGIIMGVVAA), 136–156 (LALLGVSVPSFWLAILAVILF), 178–198 (WLRSLILPASILALFQIGYLA), 238–258 (VSVLTVSGYIFSLLIGGSVVI), and 287–307 (MLFLGFLFVAINVLVDILYTI). In terms of domain architecture, ABC transmembrane type-1 spans 96–305 (LPVTISLALL…AINVLVDILY (210 aa)).

The protein belongs to the binding-protein-dependent transport system permease family. As to quaternary structure, the complex is composed of two ATP-binding proteins (BMEII0205 and BMEII0206), two transmembrane proteins (BMEII0207/BMEII0208 and BMEII0209) and a solute-binding protein (BMEII0210).

It is found in the cell inner membrane. In terms of biological role, probably part of an ABC transporter complex that could be involved in peptide import. Probably responsible for the translocation of the substrate across the membrane. The chain is Putative peptide transport system permease protein BMEII0209 from Brucella melitensis biotype 1 (strain ATCC 23456 / CCUG 17765 / NCTC 10094 / 16M).